The primary structure comprises 152 residues: Actin-related protein 2/3 complex subunit 5-B (152 aa).

Positions 21 to 44 are disordered; that stretch reads NKFVDDQLQEEPAEPQGPDEAEVD. A compositionally biased stretch (acidic residues) spans 27 to 43; the sequence is QLQEEPAEPQGPDEAEV.

This sequence belongs to the ARPC5 family. Component of the Arp2/3 complex composed of actr2/arp2, actr3/arp3, arpc1 (arpc1a or arpc1b), arpc2, arpc3, arpc4 and arpc5.

The protein resides in the cytoplasm. Its subcellular location is the cytoskeleton. It is found in the cell projection. It localises to the nucleus. Component of the Arp2/3 complex, a multiprotein complex that mediates actin polymerization upon stimulation by nucleation-promoting factor (NPF). The Arp2/3 complex mediates the formation of branched actin networks in the cytoplasm, providing the force for cell motility. In addition to its role in the cytoplasmic cytoskeleton, the Arp2/3 complex also promotes actin polymerization in the nucleus, thereby regulating gene transcription and repair of damaged DNA. The Arp2/3 complex promotes homologous recombination (HR) repair in response to DNA damage by promoting nuclear actin polymerization, leading to drive motility of double-strand breaks (DSBs). The chain is Actin-related protein 2/3 complex subunit 5-B (arpc5-b) from Xenopus laevis (African clawed frog).